Here is a 348-residue protein sequence, read N- to C-terminus: 3'-dehydrocarminate deglycosidase alpha subunit (348 aa).

Glu-145 serves as a coordination point for Mg(2+). The active-site Proton acceptor is the His-147. Mg(2+)-binding residues include Asp-177, His-275, and Glu-311.

This sequence belongs to the C-glycoside deglycosidase alpha subunit family. As to quaternary structure, heterodimer composed of an alpha subunit (CarB) and a beta subunit (CarC). It depends on Mg(2+) as a cofactor.

The enzyme catalyses 3'-dehydrocarminate + H(+) = kermesate + 1,5-anhydro-D-erythro-hex-1-en-3-ulose. Its activity is regulated as follows. Activity is strongly reduced in the presence of chelating agents. Carbon-carbon bond-cleaving enzyme which participates in a carminate degradation pathway. Cleaves the C-C bond in 3'-dehydrocarminate to form kermesate. Also shows weak activity with other C-glycosides, such as 3''-dehydropuerarin (3''-oxo-puerarin), 3''-dehydroisoorientin (3''-oxo-homoorientin) and 3'-dehydromangiferin (3'-oxo-mangiferin). The protein is 3'-dehydrocarminate deglycosidase alpha subunit of Microbacterium sp.